The sequence spans 312 residues: Glyoxylate/hydroxypyruvate reductase A (312 aa).

The active site involves Arg-227. His-275 (proton donor) is an active-site residue.

Belongs to the D-isomer specific 2-hydroxyacid dehydrogenase family. GhrA subfamily.

Its subcellular location is the cytoplasm. The enzyme catalyses glycolate + NADP(+) = glyoxylate + NADPH + H(+). It catalyses the reaction (R)-glycerate + NAD(+) = 3-hydroxypyruvate + NADH + H(+). The catalysed reaction is (R)-glycerate + NADP(+) = 3-hydroxypyruvate + NADPH + H(+). Its function is as follows. Catalyzes the NADPH-dependent reduction of glyoxylate and hydroxypyruvate into glycolate and glycerate, respectively. This is Glyoxylate/hydroxypyruvate reductase A from Klebsiella pneumoniae subsp. pneumoniae (strain ATCC 700721 / MGH 78578).